Here is a 203-residue protein sequence, read N- to C-terminus: GTP-binding protein yptV1 (203 aa).

Residues 15–23 (GDSGVGKSC), 33–40 (YTESYIST), 63–67 (DTAGQ), 121–124 (NKSD), and 151–153 (SAK) contribute to the GTP site. The Effector region signature appears at 37 to 45 (YISTIGVDF). The segment at 173–203 (MASQPVPPKPGGPVVRPTEGKPINNKSSSCC) is disordered. 2 S-geranylgeranyl cysteine lipidation sites follow: Cys202 and Cys203.

Belongs to the small GTPase superfamily. Rab family.

The protein resides in the cell membrane. Protein transport. Probably involved in vesicular traffic. This Volvox carteri (Green alga) protein is GTP-binding protein yptV1 (YPTV1).